A 262-amino-acid chain; its full sequence is 2-aminoethylphosphonate dioxygenase (262 aa).

Lys108 serves as a coordination point for 2-oxoglutarate. Fe cation is bound by residues His118, Asp120, and His198.

The protein belongs to the PhyH family. Fe(2+) serves as cofactor.

It catalyses the reaction (2-aminoethyl)phosphonate + 2-oxoglutarate + O2 = (1R)-(2-amino-1-hydroxyethyl)phosphonate + succinate + CO2. Its activity is regulated as follows. Activity is enhanced by ascorbate. Functionally, involved in the degradation of the organophosphonate 2-aminoethylphosphonic acid (2-AEP). Catalyzes the hydroxylation of 2-aminoethylphosphonic acid to yield (2-amino-1-hydroxyethyl)phosphonic acid. The protein is 2-aminoethylphosphonate dioxygenase of Uncultured bacterium HF130_AEPn_1.